We begin with the raw amino-acid sequence, 232 residues long: Protein INAPERTURATE POLLEN 1 homolog (232 aa).

As to quaternary structure, interacts with LECRKS7/DAF1.

The protein resides in the cytoplasm. Its function is as follows. Required for pollen aperture formation, male fertility and LECRKS7/DAF1 function. Seems to be involved in operculum protrusion. Participates in the modification of plasma membrane at future aperture sites, possibly by creating close contact between the plasma membrane and callose wall to prevent primexine formation and sporopollenin deposition. This is Protein INAPERTURATE POLLEN 1 homolog from Oryza sativa subsp. japonica (Rice).